A 247-amino-acid chain; its full sequence is Syntaxin-like protein fsv1 (247 aa).

The stretch at 27-94 forms a coiled coil; the sequence is NPDEEIESSL…FEKQRRASSI (68 aa). Residues 88-130 form a disordered region; it reads QRRASSIPADGTSAFSANPQVASTNNKLTPLPSLQKTTSSSEG. Over residues 100–130 the composition is skewed to polar residues; it reads SAFSANPQVASTNNKLTPLPSLQKTTSSSEG. In terms of domain architecture, t-SNARE coiled-coil homology spans 159–221; the sequence is QQMLNEQEES…DHAKNRLNKV (63 aa).

It localises to the golgi apparatus membrane. The protein resides in the prevacuolar compartment membrane. In terms of biological role, involved in vesicle-mediated protein transport between the Golgi and the vacuole. In Schizosaccharomyces pombe (strain 972 / ATCC 24843) (Fission yeast), this protein is Syntaxin-like protein fsv1 (fsv1).